Reading from the N-terminus, the 138-residue chain is Transcription antitermination protein NusB (138 aa).

The protein belongs to the NusB family.

Involved in transcription antitermination. Required for transcription of ribosomal RNA (rRNA) genes. Binds specifically to the boxA antiterminator sequence of the ribosomal RNA (rrn) operons. The protein is Transcription antitermination protein NusB of Photorhabdus laumondii subsp. laumondii (strain DSM 15139 / CIP 105565 / TT01) (Photorhabdus luminescens subsp. laumondii).